A 90-amino-acid chain; its full sequence is Small ribosomal subunit protein uS19 (90 aa).

This sequence belongs to the universal ribosomal protein uS19 family.

Protein S19 forms a complex with S13 that binds strongly to the 16S ribosomal RNA. This is Small ribosomal subunit protein uS19 from Thioalkalivibrio sulfidiphilus (strain HL-EbGR7).